Consider the following 232-residue polypeptide: Ribose-5-phosphate isomerase A (232 aa).

Substrate-binding positions include threonine 28–threonine 31, aspartate 83–aspartate 86, and lysine 96–glycine 99. The active-site Proton acceptor is the glutamate 105. Lysine 123 lines the substrate pocket.

Belongs to the ribose 5-phosphate isomerase family. In terms of assembly, homodimer.

The enzyme catalyses aldehydo-D-ribose 5-phosphate = D-ribulose 5-phosphate. Its pathway is carbohydrate degradation; pentose phosphate pathway; D-ribose 5-phosphate from D-ribulose 5-phosphate (non-oxidative stage): step 1/1. Functionally, catalyzes the reversible conversion of ribose-5-phosphate to ribulose 5-phosphate. The chain is Ribose-5-phosphate isomerase A from Rhodopseudomonas palustris (strain HaA2).